A 165-amino-acid polypeptide reads, in one-letter code: Phosphopantetheine adenylyltransferase (165 aa).

Serine 10 provides a ligand contact to substrate. ATP-binding positions include serine 10–phenylalanine 11 and histidine 18. 3 residues coordinate substrate: lysine 42, threonine 79, and arginine 93. Residues glycine 94 to arginine 96, glutamate 104, and valine 129 to threonine 135 each bind ATP.

Belongs to the bacterial CoaD family. As to quaternary structure, homohexamer. Mg(2+) is required as a cofactor.

The protein localises to the cytoplasm. It catalyses the reaction (R)-4'-phosphopantetheine + ATP + H(+) = 3'-dephospho-CoA + diphosphate. It functions in the pathway cofactor biosynthesis; coenzyme A biosynthesis; CoA from (R)-pantothenate: step 4/5. In terms of biological role, reversibly transfers an adenylyl group from ATP to 4'-phosphopantetheine, yielding dephospho-CoA (dPCoA) and pyrophosphate. This Nitrobacter winogradskyi (strain ATCC 25391 / DSM 10237 / CIP 104748 / NCIMB 11846 / Nb-255) protein is Phosphopantetheine adenylyltransferase.